A 251-amino-acid polypeptide reads, in one-letter code: 5'-nucleotidase SurE (251 aa).

A divalent metal cation is bound by residues Asp8, Asp9, Ser39, and Asn95.

Belongs to the SurE nucleotidase family. A divalent metal cation is required as a cofactor.

Its subcellular location is the cytoplasm. It carries out the reaction a ribonucleoside 5'-phosphate + H2O = a ribonucleoside + phosphate. Nucleotidase that shows phosphatase activity on nucleoside 5'-monophosphates. This is 5'-nucleotidase SurE from Clostridium botulinum (strain Alaska E43 / Type E3).